Reading from the N-terminus, the 188-residue chain is Peptidyl-tRNA hydrolase (188 aa).

Residue tyrosine 14 participates in tRNA binding. Histidine 19 serves as the catalytic Proton acceptor. Residues tyrosine 64, asparagine 66, and asparagine 112 each coordinate tRNA.

Belongs to the PTH family. In terms of assembly, monomer.

The protein resides in the cytoplasm. The enzyme catalyses an N-acyl-L-alpha-aminoacyl-tRNA + H2O = an N-acyl-L-amino acid + a tRNA + H(+). Functionally, hydrolyzes ribosome-free peptidyl-tRNAs (with 1 or more amino acids incorporated), which drop off the ribosome during protein synthesis, or as a result of ribosome stalling. In terms of biological role, catalyzes the release of premature peptidyl moieties from peptidyl-tRNA molecules trapped in stalled 50S ribosomal subunits, and thus maintains levels of free tRNAs and 50S ribosomes. The sequence is that of Peptidyl-tRNA hydrolase from Clostridium tetani (strain Massachusetts / E88).